The primary structure comprises 204 residues: Large ribosomal subunit protein uL4 (204 aa).

The interval 47–69 (KAQKNRAAVSGGGKKPWRQKGTG) is disordered.

It belongs to the universal ribosomal protein uL4 family. Part of the 50S ribosomal subunit.

In terms of biological role, one of the primary rRNA binding proteins, this protein initially binds near the 5'-end of the 23S rRNA. It is important during the early stages of 50S assembly. It makes multiple contacts with different domains of the 23S rRNA in the assembled 50S subunit and ribosome. Functionally, forms part of the polypeptide exit tunnel. This chain is Large ribosomal subunit protein uL4, found in Teredinibacter turnerae (strain ATCC 39867 / T7901).